The chain runs to 276 residues: NAD kinase (276 aa).

Asp67 (proton acceptor) is an active-site residue. NAD(+) is bound by residues 67-68, Arg72, 136-137, Lys147, Arg164, Asp166, 177-182, Ala201, and Gln235; these read DG, ND, and TAYALS.

Belongs to the NAD kinase family. A divalent metal cation is required as a cofactor.

The protein localises to the cytoplasm. The catalysed reaction is NAD(+) + ATP = ADP + NADP(+) + H(+). Functionally, involved in the regulation of the intracellular balance of NAD and NADP, and is a key enzyme in the biosynthesis of NADP. Catalyzes specifically the phosphorylation on 2'-hydroxyl of the adenosine moiety of NAD to yield NADP. The protein is NAD kinase of Thermococcus sibiricus (strain DSM 12597 / MM 739).